We begin with the raw amino-acid sequence, 142 residues long: Large ribosomal subunit protein uL13 (142 aa).

Belongs to the universal ribosomal protein uL13 family. In terms of assembly, part of the 50S ribosomal subunit.

Its function is as follows. This protein is one of the early assembly proteins of the 50S ribosomal subunit, although it is not seen to bind rRNA by itself. It is important during the early stages of 50S assembly. The sequence is that of Large ribosomal subunit protein uL13 from Tolumonas auensis (strain DSM 9187 / NBRC 110442 / TA 4).